A 183-amino-acid chain; its full sequence is Shikimate kinase (183 aa).

Gly15 to Thr20 serves as a coordination point for ATP. Ser19 is a binding site for Mg(2+). Asp37, Arg61, and Gly85 together coordinate substrate. Arg123 lines the ATP pocket. Arg142 contributes to the substrate binding site.

It belongs to the shikimate kinase family. As to quaternary structure, monomer. Requires Mg(2+) as cofactor.

It is found in the cytoplasm. The catalysed reaction is shikimate + ATP = 3-phosphoshikimate + ADP + H(+). Its pathway is metabolic intermediate biosynthesis; chorismate biosynthesis; chorismate from D-erythrose 4-phosphate and phosphoenolpyruvate: step 5/7. Catalyzes the specific phosphorylation of the 3-hydroxyl group of shikimic acid using ATP as a cosubstrate. In Paracidovorax citrulli (strain AAC00-1) (Acidovorax citrulli), this protein is Shikimate kinase.